The following is a 363-amino-acid chain: 3-dehydroquinate synthase (363 aa).

NAD(+)-binding positions include 72 to 77 (SGEKEK), 130 to 131 (TT), lysine 142, and lysine 151. The Zn(2+) site is built by glutamate 184, histidine 247, and histidine 264.

The protein belongs to the sugar phosphate cyclases superfamily. Dehydroquinate synthase family. Co(2+) serves as cofactor. Requires Zn(2+) as cofactor. The cofactor is NAD(+).

The protein resides in the cytoplasm. It catalyses the reaction 7-phospho-2-dehydro-3-deoxy-D-arabino-heptonate = 3-dehydroquinate + phosphate. It participates in metabolic intermediate biosynthesis; chorismate biosynthesis; chorismate from D-erythrose 4-phosphate and phosphoenolpyruvate: step 2/7. Catalyzes the conversion of 3-deoxy-D-arabino-heptulosonate 7-phosphate (DAHP) to dehydroquinate (DHQ). The chain is 3-dehydroquinate synthase from Bacillus thuringiensis subsp. konkukian (strain 97-27).